We begin with the raw amino-acid sequence, 288 residues long: Oxaloacetate decarboxylase (288 aa).

Substrate is bound at residue serine 47. Aspartate 85 contacts Mg(2+). Positions 156 and 232 each coordinate substrate.

This sequence belongs to the isocitrate lyase/PEP mutase superfamily. Oxaloacetate decarboxylase family. In terms of assembly, homotetramer; dimer of dimers. It depends on Mg(2+) as a cofactor.

It catalyses the reaction oxaloacetate + H(+) = pyruvate + CO2. Catalyzes the decarboxylation of oxaloacetate into pyruvate. Seems to play a role in maintaining cellular concentrations of bicarbonate and pyruvate. The chain is Oxaloacetate decarboxylase from Bradyrhizobium sp. (strain BTAi1 / ATCC BAA-1182).